We begin with the raw amino-acid sequence, 152 residues long: Arginine repressor (152 aa).

The protein belongs to the ArgR family.

Its subcellular location is the cytoplasm. It participates in amino-acid biosynthesis; L-arginine biosynthesis [regulation]. Functionally, regulates arginine biosynthesis genes. The polypeptide is Arginine repressor (Caldicellulosiruptor saccharolyticus (strain ATCC 43494 / DSM 8903 / Tp8T 6331)).